We begin with the raw amino-acid sequence, 225 residues long: MLTDSALLTLLQWVSPALPIGGFNYSEGLETLIAQGQITSAAALQDWLGFELAFGSAQWETAVMARVYRAIAKGDFEAVHQWNAWLSAARESAELRAQNWQMGTALINLVAALDRLPPALQTGQPYPWNVSVAFCIAANLADIPLETALLGYLHSWATTLINAAVKLIPLGQTAGQLLLRQLQPQIQQTVQQSLNVTDDNLESCTLGLALASMQHETLYCRLFRS.

Belongs to the UreF family. In terms of assembly, ureD, UreF and UreG form a complex that acts as a GTP-hydrolysis-dependent molecular chaperone, activating the urease apoprotein by helping to assemble the nickel containing metallocenter of UreC. The UreE protein probably delivers the nickel.

It localises to the cytoplasm. In terms of biological role, required for maturation of urease via the functional incorporation of the urease nickel metallocenter. This is Urease accessory protein UreF from Thermosynechococcus vestitus (strain NIES-2133 / IAM M-273 / BP-1).